We begin with the raw amino-acid sequence, 74 residues long: Salivary glue protein Sgs-7 (74 aa).

Positions 1–23 (MKLIAVTIIACILLIGFSDLALG) are cleaved as a signal peptide.

The chain is Salivary glue protein Sgs-7 (Sgs7) from Drosophila melanogaster (Fruit fly).